We begin with the raw amino-acid sequence, 145 residues long: Small ribosomal subunit protein eS12A (145 aa).

This sequence belongs to the eukaryotic ribosomal protein eS12 family. In terms of assembly, component of the small ribosomal subunit (SSU). Mature yeast ribosomes consist of a small (40S) and a large (60S) subunit. The 40S small subunit contains 1 molecule of ribosomal RNA (18S rRNA) and at least 33 different proteins. The large 60S subunit contains 3 rRNA molecules (25S, 5.8S and 5S rRNA) and at least 46 different proteins.

The protein localises to the cytoplasm. Functionally, component of the ribosome, a large ribonucleoprotein complex responsible for the synthesis of proteins in the cell. The small ribosomal subunit (SSU) binds messenger RNAs (mRNAs) and translates the encoded message by selecting cognate aminoacyl-transfer RNA (tRNA) molecules. The large subunit (LSU) contains the ribosomal catalytic site termed the peptidyl transferase center (PTC), which catalyzes the formation of peptide bonds, thereby polymerizing the amino acids delivered by tRNAs into a polypeptide chain. The nascent polypeptides leave the ribosome through a tunnel in the LSU and interact with protein factors that function in enzymatic processing, targeting, and the membrane insertion of nascent chains at the exit of the ribosomal tunnel. The sequence is that of Small ribosomal subunit protein eS12A (rps1201) from Schizosaccharomyces pombe (strain 972 / ATCC 24843) (Fission yeast).